We begin with the raw amino-acid sequence, 519 residues long: uncharacterized protein (519 aa).

14 consecutive transmembrane segments (helical) span residues 37 to 57 (ISMS…AQLM), 82 to 102 (GQLS…ILIA), 114 to 134 (MFVL…FSYY), 146 to 166 (ALTG…LGRV), 175 to 195 (LIFA…SVFS), 209 to 229 (WTTA…IPHI), 240 to 260 (FDYL…FSWN), 269 to 289 (VPYV…FVLV), 309 to 329 (CVLI…YYLW), 337 to 357 (FATP…GCAA), 373 to 393 (IMVV…TAPI), 402 to 422 (FVSI…ATLM), 434 to 454 (IAAS…LGIA), and 475 to 495 (AWYM…LTVF).

This sequence belongs to the major facilitator superfamily.

It localises to the endoplasmic reticulum. Its subcellular location is the membrane. This is an uncharacterized protein from Schizosaccharomyces pombe (strain 972 / ATCC 24843) (Fission yeast).